Consider the following 286-residue polypeptide: ATP synthase gamma chain (286 aa).

Belongs to the ATPase gamma chain family. F-type ATPases have 2 components, CF(1) - the catalytic core - and CF(0) - the membrane proton channel. CF(1) has five subunits: alpha(3), beta(3), gamma(1), delta(1), epsilon(1). CF(0) has three main subunits: a, b and c.

The protein localises to the cell inner membrane. In terms of biological role, produces ATP from ADP in the presence of a proton gradient across the membrane. The gamma chain is believed to be important in regulating ATPase activity and the flow of protons through the CF(0) complex. The protein is ATP synthase gamma chain of Flavobacterium psychrophilum (strain ATCC 49511 / DSM 21280 / CIP 103535 / JIP02/86).